The sequence spans 499 residues: Serine/threonine protein phosphatase 2A 57 kDa regulatory subunit B' beta isoform (499 aa).

Basic residues predominate over residues methionine 1–proline 13. The segment at methionine 1–proline 65 is disordered.

Belongs to the phosphatase 2A regulatory subunit B56 family. As to quaternary structure, PP2A consists of a common heteromeric enzyme, composed of a catalytic subunit (subunits C), a constant regulatory subunit (subunit A), and a variety of regulatory subunits such as subunits B (the R2/B/PR55/B55, R3/B''/PR72/PR130/PR59 and R5/B'/B56 families). Interacts with BZR1. Interacts with BRI1. Interacts with SRK2E/OST1. As to expression, expressed ubiquitously, higher levels in cotyledons and flowers.

It localises to the nucleus. The protein resides in the cytoplasm. Its function is as follows. The B regulatory subunit may modulate substrate selectivity and catalytic activity, and may also direct the localization of the catalytic enzyme to a particular subcellular compartment. Required for the formation of the PP2A holoenzyme that positively regulates brassinosteroid signaling by dephosphorylating and activating BZR1. The protein is Serine/threonine protein phosphatase 2A 57 kDa regulatory subunit B' beta isoform (B'BETA) of Arabidopsis thaliana (Mouse-ear cress).